The following is a 199-amino-acid chain: FMN-dependent NADH:quinone oxidoreductase (199 aa).

FMN is bound by residues Ser-9 and 95–98 (MYNF).

It belongs to the azoreductase type 1 family. In terms of assembly, homodimer. It depends on FMN as a cofactor.

It carries out the reaction 2 a quinone + NADH + H(+) = 2 a 1,4-benzosemiquinone + NAD(+). It catalyses the reaction N,N-dimethyl-1,4-phenylenediamine + anthranilate + 2 NAD(+) = 2-(4-dimethylaminophenyl)diazenylbenzoate + 2 NADH + 2 H(+). Quinone reductase that provides resistance to thiol-specific stress caused by electrophilic quinones. Its function is as follows. Also exhibits azoreductase activity. Catalyzes the reductive cleavage of the azo bond in aromatic azo compounds to the corresponding amines. This Dechloromonas aromatica (strain RCB) protein is FMN-dependent NADH:quinone oxidoreductase.